The primary structure comprises 475 residues: 3-isopropylmalate dehydratase large subunit (475 aa).

3 residues coordinate [4Fe-4S] cluster: Cys-352, Cys-412, and Cys-415.

Belongs to the aconitase/IPM isomerase family. LeuC type 1 subfamily. Heterodimer of LeuC and LeuD. Requires [4Fe-4S] cluster as cofactor.

It carries out the reaction (2R,3S)-3-isopropylmalate = (2S)-2-isopropylmalate. The protein operates within amino-acid biosynthesis; L-leucine biosynthesis; L-leucine from 3-methyl-2-oxobutanoate: step 2/4. In terms of biological role, catalyzes the isomerization between 2-isopropylmalate and 3-isopropylmalate, via the formation of 2-isopropylmaleate. The protein is 3-isopropylmalate dehydratase large subunit of Gluconobacter oxydans (strain 621H) (Gluconobacter suboxydans).